We begin with the raw amino-acid sequence, 567 residues long: Potassium-transporting ATPase potassium-binding subunit (567 aa).

Transmembrane regions (helical) follow at residues 11–31 (LYLLVLLALAWPLGRYLAALL), 67–87 (AAAILLFNLAGVVLLFLLQRW), 136–156 (GLAVQNFLSAATGIAVVVALV), 179–199 (LWLLLPLSIVVALVLVWQGVV), 255–275 (FSNWVEMLSIFLVPAALVVMF), 286–306 (VVLLAAMTVLFVGAFAVVYLA), 333–353 (FGVLASSLFATITTAASCGAV), 363–383 (LGGGMTMLLMQLGEVVFGGVG), 385–405 (GLYGMLLFAVLAVFMAGLMIG), 422–442 (LVSVAILVGPLLVLAGTAIAV), 489–509 (LMLAVAMWFGRFAVIVPVLAL), and 532–552 (LFVVLLVLSVLLIGALTYIPA).

This sequence belongs to the KdpA family. The system is composed of three essential subunits: KdpA, KdpB and KdpC.

The protein resides in the cell inner membrane. Functionally, part of the high-affinity ATP-driven potassium transport (or Kdp) system, which catalyzes the hydrolysis of ATP coupled with the electrogenic transport of potassium into the cytoplasm. This subunit binds the periplasmic potassium ions and delivers the ions to the membrane domain of KdpB through an intramembrane tunnel. This is Potassium-transporting ATPase potassium-binding subunit from Laribacter hongkongensis (strain HLHK9).